Here is a 429-residue protein sequence, read N- to C-terminus: MSHRRMQLALSLVFILCGLFNSIFCEKQQHSQQHANLVLLKKISAFSQKMEAHPKAFAQELFKALIAENPKKNIIFSPAAMTITLATLSLGIKSTMSTNHPEDLELELKLLDAHKCLHHLVHLGRELVKQKQLRHQDILFLNSKMMANQMLLHQIRKLQKMDIQMIDFSDTEKAKKAISHHVAEKTHTKIRDLITDLNPETILCLVNHIFFKGILKRAFQPNLTQKEDFFLNDKTKVQVDMMRKTEQMLYSRSEELFATMVKMPFKGNVSLILMLPDAGHFDNALKKLTAKRAKLQKISNFRLVHLTLPKFKITFDINFKHLLPKINLKHLLPKIDPKHTLTTTASSQHVTLKAPLPNLEALHQVEIELSEHALTTDTAIHTDNLLKVPANTKEVPVVVKFNRPFLLFVEDEITQTDLFVGQVLNPQVE.

The N-terminal stretch at 1–25 (MSHRRMQLALSLVFILCGLFNSIFC) is a signal peptide. N-linked (GlcNAc...) asparagine glycosylation is found at N222 and N268.

Belongs to the serpin family. UTMP subfamily. In terms of processing, glycosylated; carries the so-called mannose 6-phosphate lysosomal recognition marker on its carbohydrate chains. In terms of tissue distribution, secreted by ovine endometrium under the influence of progesterone.

This Ovis aries (Sheep) protein is Uterine milk protein.